The sequence spans 192 residues: Casparian strip membrane protein 1 (192 aa).

Residues 1–30 (MSTTVDVPESSNVAKGKAIAVARPGGWKKG) lie on the Cytoplasmic side of the membrane. The helical transmembrane segment at 31–51 (LAIMDFILRLGGIAASLGAAA) threads the bilayer. At 52–80 (TMGTSDQTLPFFTQFFQFEASYDSFTTFQ) the chain is on the extracellular side. A helical membrane pass occupies residues 81-101 (FFVITMALVAGYLVLSLPFSV). Residues 102–113 (VAIIRPHAPGPR) lie on the Cytoplasmic side of the membrane. Residues 114–134 (LFLIILDTVFLTLATASGASA) form a helical membrane-spanning segment. Over 135–166 (AAIVYLAHNGNQDSNWLAICNQFGDFCAQTSG) the chain is Extracellular. A helical transmembrane segment spans residues 167–187 (AVVASFVAVVILVLLVIMSAL). Residues 188–192 (ALRRH) lie on the Cytoplasmic side of the membrane.

It belongs to the Casparian strip membrane proteins (CASP) family. As to quaternary structure, homodimer and heterodimers.

It localises to the cell membrane. Its function is as follows. Regulates membrane-cell wall junctions and localized cell wall deposition. Required for establishment of the Casparian strip membrane domain (CSD) and the subsequent formation of Casparian strips, a cell wall modification of the root endodermis that determines an apoplastic barrier between the intraorganismal apoplasm and the extraorganismal apoplasm and prevents lateral diffusion. The polypeptide is Casparian strip membrane protein 1 (Vigna unguiculata (Cowpea)).